The following is a 601-amino-acid chain: MSGQRKGYIAKVSGPVVIAKGISDIKMGEVVYVGNEGLLGEVVRVSQDSFAVQVYEDTSGLRPKEPVTATGKLLVAELGPGLMGRVFDGVQRPLKSIEELVGPFVKRGVKVNPLPRNVKWHFKPSVKVGDKVSSGDIIGVVQETPLIEHRVMVPIGVSGKVKEVVPEGDYTVEDPVVILESDGRVVELTMKQEWPVRQPRPYKERLPSEVPLLIGQRIIDTFFPIAKGGAGAIPGGFGTGKTVTLHKVSMYSDSQIVVYIGCGERGNEIAEMLKEFPVLVDPKSGRPIIERSIIIANTSNMPVSAREASIYMGVTIAEYYRDQGYDVTLIADSTSRWAEALREIAGRLGELPVERGYPAYLPDKIAEFYERGGRVKALGSPERSGSVTVLGAVSPPGGDYNEPVTIHTLRFVGTMWALDTDLAYRRHFPAINWLKSFSQYADIIERWWVKNVSPEFPKYRRRALRLLTVASEIEAIASVVGEGALPDDQRLILLTSEIIKEGFLRQTALSGEDVFCKPEKQYWLLKMMMDFFDKSYELIRKRVSIEEILRMPEIYEMMRVKEDERGLQAVKELYERVMAKLDEIAQRHGVTLAVEAEEVVA.

235-242 (GGFGTGKT) contributes to the ATP binding site.

This sequence belongs to the ATPase alpha/beta chains family. Has multiple subunits with at least A(3), B(3), C, D, E, F, H, I and proteolipid K(x).

It localises to the cell membrane. It catalyses the reaction ATP + H2O + 4 H(+)(in) = ADP + phosphate + 5 H(+)(out). Its function is as follows. Component of the A-type ATP synthase that produces ATP from ADP in the presence of a proton gradient across the membrane. The A chain is the catalytic subunit. This chain is A-type ATP synthase subunit A, found in Thermofilum pendens (strain DSM 2475 / Hrk 5).